A 300-amino-acid chain; its full sequence is 3-methyl-2-oxobutanoate hydroxymethyltransferase (300 aa).

Residues D75 and D118 each coordinate Mg(2+). 3-methyl-2-oxobutanoate is bound by residues 75-76 (DS), D118, and K147. E149 provides a ligand contact to Mg(2+). E216 acts as the Proton acceptor in catalysis.

This sequence belongs to the PanB family. Homodecamer; pentamer of dimers. It depends on Mg(2+) as a cofactor.

Its subcellular location is the cytoplasm. The enzyme catalyses 3-methyl-2-oxobutanoate + (6R)-5,10-methylene-5,6,7,8-tetrahydrofolate + H2O = 2-dehydropantoate + (6S)-5,6,7,8-tetrahydrofolate. It participates in cofactor biosynthesis; (R)-pantothenate biosynthesis; (R)-pantoate from 3-methyl-2-oxobutanoate: step 1/2. Catalyzes the reversible reaction in which hydroxymethyl group from 5,10-methylenetetrahydrofolate is transferred onto alpha-ketoisovalerate to form ketopantoate. This chain is 3-methyl-2-oxobutanoate hydroxymethyltransferase, found in Verminephrobacter eiseniae (strain EF01-2).